The primary structure comprises 314 residues: Aspartate carbamoyltransferase catalytic subunit (314 aa).

R55 and T56 together coordinate carbamoyl phosphate. K83 provides a ligand contact to L-aspartate. Carbamoyl phosphate is bound by residues R105, H139, and Q142. L-aspartate contacts are provided by R172 and R226. G267 and P268 together coordinate carbamoyl phosphate.

It belongs to the aspartate/ornithine carbamoyltransferase superfamily. ATCase family. In terms of assembly, heterododecamer (2C3:3R2) of six catalytic PyrB chains organized as two trimers (C3), and six regulatory PyrI chains organized as three dimers (R2).

It carries out the reaction carbamoyl phosphate + L-aspartate = N-carbamoyl-L-aspartate + phosphate + H(+). Its pathway is pyrimidine metabolism; UMP biosynthesis via de novo pathway; (S)-dihydroorotate from bicarbonate: step 2/3. Catalyzes the condensation of carbamoyl phosphate and aspartate to form carbamoyl aspartate and inorganic phosphate, the committed step in the de novo pyrimidine nucleotide biosynthesis pathway. The chain is Aspartate carbamoyltransferase catalytic subunit from Rhodococcus opacus (strain B4).